The primary structure comprises 382 residues: Gap junction alpha-1 protein (382 aa).

The Cytoplasmic segment spans residues 2–23 (GDWSALGKLLDKVQAYSTAGGK). Serine 5 bears the Phosphoserine mark. Residues 24–44 (VWLSVLFIFRILLLGTAVESA) traverse the membrane as a helical segment. Over 45 to 76 (WGDEQSAFRCNTQQPGCENVCYDKSFPISHVR) the chain is Extracellular. Intrachain disulfides connect cysteine 54–cysteine 192 and cysteine 187–cysteine 198. Residues 77–97 (FWVLQIIFVSVPTLLYLAHVF) traverse the membrane as a helical segment. The Cytoplasmic portion of the chain corresponds to 98-155 (YVMRKEEKLNKKEEELKVAQTDGANVDMHLKQIEIKKFKYGIEEHGKVKMRGGLLRTY). Residue lysine 144 forms a Glycyl lysine isopeptide (Lys-Gly) (interchain with G-Cter in SUMO) linkage. Residues 156–176 (IISILFKSVFEVAFLLIQWYI) form a helical membrane-spanning segment. At 177-207 (YGFSLSAVYTCKRDPCPHQVDCFLSRPTEKT) the chain is on the extracellular side. Residues 208–228 (IFIIFMLVVSLVSLALNIIEL) form a helical membrane-spanning segment. At 229-382 (FYVFFKGIKD…SRPRPDDLEI (154 aa)) the chain is on the cytoplasmic side. A Glycyl lysine isopeptide (Lys-Gly) (interchain with G-Cter in SUMO) cross-link involves residue lysine 237. The tract at residues 244-382 (SDLYHATTGP…SRPRPDDLEI (139 aa)) is interaction with NOV. Tyrosine 247 is modified (phosphotyrosine). Residues serine 255, serine 257, and serine 262 each carry the phosphoserine modification. An interaction with UBQLN4 region spans residues 264–382 (TYAYFNGCSS…SRPRPDDLEI (119 aa)). Residue cysteine 271 is modified to S-nitrosocysteine. Residue threonine 275 is modified to Phosphothreonine. Phosphoserine occurs at positions 306 and 314. Residues 317 to 332 (QNRMGQAGSTISNSHA) show a composition bias toward polar residues. A disordered region spans residues 317–382 (QNRMGQAGST…SRPRPDDLEI (66 aa)). Serine 325 is modified (phosphoserine; by CK1). Threonine 326 bears the Phosphothreonine mark. 2 positions are modified to phosphoserine; by CK1: serine 328 and serine 330. 2 positions are modified to phosphoserine: serine 344 and serine 365. Residues 362-374 (RPSSRASSRASSR) are compositionally biased toward low complexity. Serine 368 bears the Phosphoserine; by PKC/PRKCG and PKC/PRKCD mark. Phosphoserine is present on residues serine 369 and serine 373.

It belongs to the connexin family. Alpha-type (group II) subfamily. As to quaternary structure, a connexon is composed of a hexamer of connexins. Interacts with SGSM3. Interacts with RIC1/CIP150. Interacts with CNST and CSNK1D. Interacts (via C-terminus) with TJP1. Interacts (via C-terminus) with SRC (via SH3 domain). Interacts (not ubiquitinated) with UBQLN4 (via UBA domain). Interacts with NOV. Interacts with TMEM65. Interacts with ANK3/ANKG and PKP2. Phosphorylation at Ser-325, Ser-328 and Ser-330 by CK1 modulates gap junction assembly. Phosphorylated at Ser-368 by PRKCG; phosphorylation induces disassembly of gap junction plaques and inhibition of gap junction activity. Phosphorylation at Ser-368 by PRKCD triggers its internalization into small vesicles leading to proteasome-mediated degradation. In terms of processing, sumoylated with SUMO1, SUMO2 and SUMO3, which may regulate the level of functional Cx43 gap junctions at the plasma membrane. May be desumoylated by SENP1 or SENP2. Post-translationally, S-nitrosylation at Cys-271 is enriched at the muscle endothelial gap junction in arteries, it augments channel permeability and may regulate of smooth muscle cell to endothelial cell communication. Acetylated in the developing cortex; leading to delocalization from the cell membrane.

Its subcellular location is the cell membrane. The protein localises to the cell junction. It is found in the gap junction. The protein resides in the endoplasmic reticulum. Gap junction protein that acts as a regulator of bladder capacity. A gap junction consists of a cluster of closely packed pairs of transmembrane channels, the connexons, through which materials of low MW diffuse from one cell to a neighboring cell. May play a critical role in the physiology of hearing by participating in the recycling of potassium to the cochlear endolymph. Negative regulator of bladder functional capacity: acts by enhancing intercellular electrical and chemical transmission, thus sensitizing bladder muscles to cholinergic neural stimuli and causing them to contract. May play a role in cell growth inhibition through the regulation of NOV expression and localization. Plays an essential role in gap junction communication in the ventricles. This Erinaceus europaeus (Western European hedgehog) protein is Gap junction alpha-1 protein (GJA1).